The primary structure comprises 2314 residues: Protein Ycf2 (2314 aa).

Residue 1653-1660 (GSIGTGRS) participates in ATP binding.

The protein belongs to the Ycf2 family.

The protein resides in the plastid. The protein localises to the chloroplast stroma. Its function is as follows. Probable ATPase of unknown function. Its presence in a non-photosynthetic plant (Epifagus virginiana) and experiments in tobacco indicate that it has an essential function which is probably not related to photosynthesis. This chain is Protein Ycf2, found in Piper cenocladum (Ant piper).